Consider the following 975-residue polypeptide: Nesprin-3 (975 aa).

Residues 1 to 925 lie on the Cytoplasmic side of the membrane; it reads MTQQPQDDFD…LGSLFRRACC (925 aa). A Spectrin 1 repeat occupies 220–325; that stretch reads REHEEYQAGV…WEEEEERLRG (106 aa). A coiled-coil region spans residues 617 to 645; the sequence is NHQHKMDQLSSDFQALQRSLEDLVDRCRQ. The Spectrin 2 repeat unit spans residues 647-740; the sequence is VQEHCTFSHQ…RELAESWRAL (94 aa). The KASH domain maps to 917–975; it reads GSLFRRACCVALPLQLLLLLFLLLLFLLPIREEDRSCTLANNFARSFTLMLRYNGPPPT. A helical; Anchor for type IV membrane protein membrane pass occupies residues 926–946; it reads VALPLQLLLLLFLLLLFLLPI. Over 947–975 the chain is Perinuclear space; sequence REEDRSCTLANNFARSFTLMLRYNGPPPT.

This sequence belongs to the nesprin family. Core component of LINC complexes which are composed of inner nuclear membrane SUN domain-containing proteins coupled to outer nuclear membrane KASH domain-containing nesprins. SUN and KASH domain-containing proteins seem to bind each other promiscuously; however, differentially expression of LINC complex constituents can give rise to specific assemblies. Interacts with SUN1 and SUN2; probably forming respective LINC complexes. Interacts with PLEC (via actin-binding domain). Interacts with DST. Interacts with SYNE1 via spectrin repeats. Interacts (via KASH domain) with TOR1A (ATP-bound); the interaction is required for SYNE3 nuclear envelope localization. The disulfid bond with SUN1 or SUN2 is required for stability of the respective LINC complex under tensile forces. As to expression, expressed in aortic endothelial cells (at protein level).

It is found in the nucleus outer membrane. The protein localises to the nucleus envelope. It localises to the rough endoplasmic reticulum. Its function is as follows. As a component of the LINC (LInker of Nucleoskeleton and Cytoskeleton) complex involved in the connection between the nuclear lamina and the cytoskeleton. The nucleocytoplasmic interactions established by the LINC complex play an important role in the transmission of mechanical forces across the nuclear envelope and in nuclear movement and positioning. Probable anchoring protein which tethers the nucleus to the cytoskeleton by binding PLEC which can associate with the intermediate filament system. Plays a role in the regulation of aortic epithelial cell morphology, and is required for flow-induced centrosome polarization and directional migration in aortic endothelial cells. This chain is Nesprin-3, found in Homo sapiens (Human).